A 158-amino-acid chain; its full sequence is UPF0145 protein Psyc_1853 (158 aa).

Polar residues predominate over residues 113–122; it reads IYQSSNQPPS. The tract at residues 113–158 is disordered; it reads IYQSSNQPPSHHSGHSQYEEPVPSAAQPSTTAQANDDLPRFNPFGE.

It belongs to the UPF0145 family.

This is UPF0145 protein Psyc_1853 from Psychrobacter arcticus (strain DSM 17307 / VKM B-2377 / 273-4).